The following is a 2346-amino-acid chain: Myomegalin (2346 aa).

4 coiled-coil regions span residues 41-132 (REDI…LVEA), 162-205 (DQYT…LLEE), 238-318 (DSHL…REML), and 350-684 (CSQL…RQYL). Glutamate 252 carries the post-translational modification Phosphoserine. Positions 698–732 (NQQAEVTPTGRLGKQTDQGSMQIPSRDDSTSLTAK) are disordered. Position 704 is a phosphothreonine (threonine 704). The segment covering 722-732 (SRDDSTSLTAK) has biased composition (basic and acidic residues). Coiled coils occupy residues 743–936 (GDLD…TLAA), 1002–1043 (LQEE…SSVS), 1096–1124 (SSLQ…EQLV), 1212–1240 (STQH…SEAT), 1346–1385 (GKSE…LSVT), and 1431–1455 (GLQA…LPKN). Residues 1193 to 1214 (DNQSQPRDPGPQSAFSLPGSTQ) form a disordered region. The span at 1205–1214 (SAFSLPGSTQ) shows a compositional bias: polar residues. Residues 1551–1642 (KDHKSEKDQA…EEKKASPSHS (92 aa)) form the Olduvai domain. Residues 1591-1600 (SLTPSSSHAL) show a composition bias toward low complexity. Disordered regions lie at residues 1591 to 1614 (SLTP…SFLS) and 1633 to 1690 (EEKK…EANQ). Over residues 1652 to 1690 (AVLSSKPSSTSASQGAKAESNSNPISLPTPQNTPKEANQ) the composition is skewed to polar residues. Coiled coils occupy residues 1736–1760 (VVSL…ASTV) and 1840–2077 (GADL…QQLE). 2 disordered regions span residues 2081 to 2103 (GKAS…PGNK) and 2127 to 2156 (VFPS…TSPV). Residues 2085–2103 (LSPSSINQNFPASTDPGNK) are compositionally biased toward polar residues. The stretch at 2273 to 2312 (ESTERELLELRTKVSKQERLLQSTTEHLKNANQQKESMEQ) forms a coiled coil.

In terms of assembly, interacts with PDE4D. Isoform 13 interacts with MAPRE1 and MAPRE3. Isoform 13 forms a pericentrosomal complex with AKAP9, CDK5RAP2 and EB1/MAPRE1; within this complex, may mediate MAPRE1-binding to CDK5RAP2. Interaction of isoform 13 with AKAP9 stabilizes both proteins. Isoform 13 interacts (via N-terminus) with CAMSAP2; this interaction is much stronger in the presence of AKAP9. In complex with AKAP9, Isoform 13 recruits CAMSAP2 to the Golgi apparatus. Isoform 13 interacts with unglycosylated LGALS3BP; this interaction may connect the pericentrosomal complex to the gamma-tubulin ring complex (gamma-TuRC) to promote microtubule assembly and acetylation. As to expression, highly expressed in adult and fetal heart, in skeletal muscle and, to a lower extent, in brain and placenta.

Its subcellular location is the golgi apparatus. It localises to the cytoplasm. The protein resides in the cytoskeleton. It is found in the microtubule organizing center. The protein localises to the centrosome. Functionally, functions as an anchor sequestering components of the cAMP-dependent pathway to Golgi and/or centrosomes. In terms of biological role, participates in microtubule dynamics, promoting microtubule assembly. Depending upon the cell context, may act at the level of the Golgi apparatus or that of the centrosome. In complex with AKAP9, recruits CAMSAP2 to the Golgi apparatus and tethers non-centrosomal minus-end microtubules to the Golgi, an important step for polarized cell movement. In complex with AKAP9, EB1/MAPRE1 and CDK5RAP2, contributes to microtubules nucleation and extension from the centrosome to the cell periphery, a crucial process for directed cell migration, mitotic spindle orientation and cell-cycle progression. This Homo sapiens (Human) protein is Myomegalin (PDE4DIP).